Here is a 520-residue protein sequence, read N- to C-terminus: Keratin, type II cytoskeletal 8 (520 aa).

The segment covering 1–19 has biased composition (low complexity); the sequence is MSTYSKKTSYTVKSSSSGS. The tract at residues 1 to 20 is disordered; that stretch reads MSTYSKKTSYTVKSSSSGSI. Residues 2-114 are head; the sequence is STYSKKTSYT…DPNIQIVRTQ (113 aa). Ser28 carries the post-translational modification Phosphoserine. Residues 115–150 form a coil 1A region; the sequence is EKEQIKTLNNRFASFIDKVRFLEQQNKMLETKWSLL. Residues 115–426 enclose the IF rod domain; the sequence is EKEQIKTLNN…KLLEGEEDRL (312 aa). The tract at residues 151–166 is linker 1; sequence QNQTATRSNIDAMFEA. A coil 1B region spans residues 168 to 259; the sequence is IANLRRQLDS…QIFEEEIREL (92 aa). Residues 260–283 form a linker 12 region; the sequence is QSQIKDTSVVVEMDNSRNLDMDAI. Residues 284–422 are coil 2; sequence VAEVRAQYED…ATYRKLLEGE (139 aa). The tail stretch occupies residues 423–520; that stretch reads EDRLATGIKA…VSESSEVVQD (98 aa).

Belongs to the intermediate filament family. As to quaternary structure, heterotetramer of two type I and two type II keratins. Keratin-8 associates with keratin-18. Expressed in simple epithelia.

It is found in the cytoplasm. The protein resides in the nucleus. Its subcellular location is the nucleoplasm. It localises to the nucleus matrix. In terms of biological role, together with KRT19, helps to link the contractile apparatus to dystrophin at the costameres of striated muscle. This Danio rerio (Zebrafish) protein is Keratin, type II cytoskeletal 8.